Consider the following 184-residue polypeptide: Putative pre-16S rRNA nuclease (184 aa).

The interval Met-1–Pro-23 is disordered.

Belongs to the YqgF nuclease family.

Its subcellular location is the cytoplasm. In terms of biological role, could be a nuclease involved in processing of the 5'-end of pre-16S rRNA. This Mycobacterium leprae (strain Br4923) protein is Putative pre-16S rRNA nuclease.